We begin with the raw amino-acid sequence, 575 residues long: Dihydroxy-acid dehydratase (575 aa).

A disordered region spans residues 1–25 (MPTTDSARAADIKQPDIKPRSRDVT). A compositionally biased stretch (basic and acidic residues) spans 8-25 (RAADIKQPDIKPRSRDVT). A [2Fe-2S] cluster-binding site is contributed by C64. D96 serves as a coordination point for Mg(2+). C137 provides a ligand contact to [2Fe-2S] cluster. Residues D138 and K139 each coordinate Mg(2+). The residue at position 139 (K139) is an N6-carboxylysine. C214 lines the [2Fe-2S] cluster pocket. E465 contributes to the Mg(2+) binding site. Catalysis depends on S491, which acts as the Proton acceptor.

Belongs to the IlvD/Edd family. In terms of assembly, homodimer. [2Fe-2S] cluster is required as a cofactor. Requires Mg(2+) as cofactor.

The catalysed reaction is (2R)-2,3-dihydroxy-3-methylbutanoate = 3-methyl-2-oxobutanoate + H2O. It carries out the reaction (2R,3R)-2,3-dihydroxy-3-methylpentanoate = (S)-3-methyl-2-oxopentanoate + H2O. The protein operates within amino-acid biosynthesis; L-isoleucine biosynthesis; L-isoleucine from 2-oxobutanoate: step 3/4. It participates in amino-acid biosynthesis; L-valine biosynthesis; L-valine from pyruvate: step 3/4. Functions in the biosynthesis of branched-chain amino acids. Catalyzes the dehydration of (2R,3R)-2,3-dihydroxy-3-methylpentanoate (2,3-dihydroxy-3-methylvalerate) into 2-oxo-3-methylpentanoate (2-oxo-3-methylvalerate) and of (2R)-2,3-dihydroxy-3-methylbutanoate (2,3-dihydroxyisovalerate) into 2-oxo-3-methylbutanoate (2-oxoisovalerate), the penultimate precursor to L-isoleucine and L-valine, respectively. This chain is Dihydroxy-acid dehydratase, found in Mycolicibacterium paratuberculosis (strain ATCC BAA-968 / K-10) (Mycobacterium paratuberculosis).